The primary structure comprises 207 residues: Thiamine-phosphate synthase (207 aa).

Residues 36-40 (QLRMK) and Asn68 contribute to the 4-amino-2-methyl-5-(diphosphooxymethyl)pyrimidine site. Mg(2+) is bound by residues Asp69 and Asp88. Residue Ser106 participates in 4-amino-2-methyl-5-(diphosphooxymethyl)pyrimidine binding. A 2-[(2R,5Z)-2-carboxy-4-methylthiazol-5(2H)-ylidene]ethyl phosphate-binding site is contributed by 132–134 (TNT). Lys135 provides a ligand contact to 4-amino-2-methyl-5-(diphosphooxymethyl)pyrimidine. Residues Gly162 and 182-183 (VS) contribute to the 2-[(2R,5Z)-2-carboxy-4-methylthiazol-5(2H)-ylidene]ethyl phosphate site.

It belongs to the thiamine-phosphate synthase family. The cofactor is Mg(2+).

The enzyme catalyses 2-[(2R,5Z)-2-carboxy-4-methylthiazol-5(2H)-ylidene]ethyl phosphate + 4-amino-2-methyl-5-(diphosphooxymethyl)pyrimidine + 2 H(+) = thiamine phosphate + CO2 + diphosphate. It catalyses the reaction 2-(2-carboxy-4-methylthiazol-5-yl)ethyl phosphate + 4-amino-2-methyl-5-(diphosphooxymethyl)pyrimidine + 2 H(+) = thiamine phosphate + CO2 + diphosphate. The catalysed reaction is 4-methyl-5-(2-phosphooxyethyl)-thiazole + 4-amino-2-methyl-5-(diphosphooxymethyl)pyrimidine + H(+) = thiamine phosphate + diphosphate. It functions in the pathway cofactor biosynthesis; thiamine diphosphate biosynthesis; thiamine phosphate from 4-amino-2-methyl-5-diphosphomethylpyrimidine and 4-methyl-5-(2-phosphoethyl)-thiazole: step 1/1. Its function is as follows. Condenses 4-methyl-5-(beta-hydroxyethyl)thiazole monophosphate (THZ-P) and 2-methyl-4-amino-5-hydroxymethyl pyrimidine pyrophosphate (HMP-PP) to form thiamine monophosphate (TMP). The chain is Thiamine-phosphate synthase from Methanococcus maripaludis (strain C5 / ATCC BAA-1333).